Consider the following 106-residue polypeptide: UPF0145 protein CTC_01500 (106 aa).

The protein belongs to the UPF0145 family.

This Clostridium tetani (strain Massachusetts / E88) protein is UPF0145 protein CTC_01500.